Here is a 358-residue protein sequence, read N- to C-terminus: DNA integrity scanning protein DisA (358 aa).

A DAC domain is found at 6 to 144 (RPTLREAVAR…RGERHVLTDS (139 aa)). ATP-binding positions include Gly-73, Leu-91, and 104-108 (TRHRS).

This sequence belongs to the DisA family. Homooctamer. Mg(2+) serves as cofactor.

The enzyme catalyses 2 ATP = 3',3'-c-di-AMP + 2 diphosphate. Its function is as follows. Participates in a DNA-damage check-point. DisA forms globular foci that rapidly scan along the chromosomes searching for lesions. Also has diadenylate cyclase activity, catalyzing the condensation of 2 ATP molecules into cyclic di-AMP (c-di-AMP). c-di-AMP likely acts as a signaling molecule that may couple DNA integrity with a cellular process. This Mycobacterium tuberculosis (strain ATCC 25177 / H37Ra) protein is DNA integrity scanning protein DisA.